The chain runs to 972 residues: 116 kDa U5 small nuclear ribonucleoprotein component (972 aa).

An N-acetylmethionine modification is found at M1. The tract at residues 1–54 is disordered; that stretch reads MDTDLYDEFGNYIGPELDSDEDDDELGRETKDLDEMDDDDDDDDVGDHDDDHPG. Composition is skewed to acidic residues over residues 17 to 26 and 34 to 48; these read LDSDEDDDEL and DEMDDDDDDDDVGDH. Phosphoserine is present on S19. A Glycyl lysine isopeptide (Lys-Gly) (interchain with G-Cter in SUMO1); alternate cross-link involves residue K64. A Glycyl lysine isopeptide (Lys-Gly) (interchain with G-Cter in SUMO2); alternate cross-link involves residue K64. Position 86 is a phosphothreonine (T86). Residues 127–409 enclose the tr-type G domain; that stretch reads ELIRNVTLCG…GIHLTKEELK (283 aa). Residues 136–143, 204–208, and 258–261 contribute to the GTP site; these read GHLHHGKT, DTPGH, and NKID.

The protein belongs to the TRAFAC class translation factor GTPase superfamily. Classic translation factor GTPase family. EF-G/EF-2 subfamily. In terms of assembly, component of the U5 snRNP and the U4/U6-U5 tri-snRNP complex, a building block of the spliceosome. The U4/U6-U5 tri-snRNP complex is composed of the U4, U6 and U5 snRNAs and at least PRPF3, PRPF4, PRPF6, PRPF8, PRPF31, SNRNP200, TXNL4A, SNRNP40, DDX23, CD2BP2, PPIH, SNU13, EFTUD2, SART1 and USP39. Component of the pre-catalytic, catalytic and post-catalytic spliceosome complexes. Component of the minor spliceosome, which splices U12-type introns. Within this complex, interacts with CRIPT. Interacts with ERBB4 and PRPF8. Interacts with PIH1D1. Interacts with RPAP3 and URI1 in a ZNHIT2-dependent manner. Interacts with NRDE2. Interacts with FAM50A. Interacts with UBL5.

The protein resides in the nucleus. Its function is as follows. Required for pre-mRNA splicing as component of the spliceosome, including pre-catalytic, catalytic and post-catalytic spliceosomal complexes. Component of the U5 snRNP and the U4/U6-U5 tri-snRNP complex, a building block of the spliceosome. As a component of the minor spliceosome, involved in the splicing of U12-type introns in pre-mRNAs. The chain is 116 kDa U5 small nuclear ribonucleoprotein component (EFTUD2) from Homo sapiens (Human).